The primary structure comprises 283 residues: uncharacterized protein (283 aa).

The N-terminal stretch at 1-23 is a signal peptide; sequence MFAFASFAISAIFFLCSFSYVSS.

Its subcellular location is the secreted. This is an uncharacterized protein from Schizosaccharomyces pombe (strain 972 / ATCC 24843) (Fission yeast).